A 377-amino-acid polypeptide reads, in one-letter code: Geranylgeranyl transferase type-1 subunit beta (377 aa).

PFTB repeat units lie at residues 144-186 (KEAC…YMLN), 193-234 (MKKA…CLMG), 245-284 (LNRIKRWCIMRQQNGYHGRPNKPVDTCYSFWVGATLKLLK), and 291-333 (FEKN…SLME). Geranylgeranyl diphosphate contacts are provided by residues 219–221 (HGG) and 263–266 (RPNK). The Zn(2+) site is built by D269 and C271. 272 to 275 (YSFW) contacts geranylgeranyl diphosphate. Residue H321 participates in Zn(2+) binding.

Belongs to the protein prenyltransferase subunit beta family. As to quaternary structure, heterodimer of FNTA and PGGT1B. PGGT1B mediates interaction with substrate peptides. It depends on Zn(2+) as a cofactor. Requires Mg(2+) as cofactor.

The catalysed reaction is geranylgeranyl diphosphate + L-cysteinyl-[protein] = S-geranylgeranyl-L-cysteinyl-[protein] + diphosphate. Its function is as follows. Catalyzes the transfer of a geranyl-geranyl moiety from geranyl-geranyl pyrophosphate to a cysteine at the fourth position from the C-terminus of proteins having the C-terminal sequence Cys-aliphatic-aliphatic-X. Known substrates include RAC1, RAC2, RAP1A and RAP1B. The protein is Geranylgeranyl transferase type-1 subunit beta (PGGT1B) of Bos taurus (Bovine).